The sequence spans 838 residues: pre-rRNA 2'-O-ribose RNA methyltransferase FTSJ3 (838 aa).

S-adenosyl-L-methionine is bound by residues glycine 56, tryptophan 58, aspartate 76, aspartate 92, and aspartate 117. Lysine 157 acts as the Proton acceptor in catalysis. Positions 332–367 are disordered; sequence ISLSSEEEEEGDEEEAVAETKQAPEEEEEREEEQLN. Phosphoserine occurs at positions 333, 335, and 336. Residues 336-348 show a composition bias toward acidic residues; the sequence is SEEEEEGDEEEAV. Arginine 390 carries the citrulline modification. Positions 453 to 482 are disordered; that stretch reads IYVSDAEDDDDTSLESDLDPEELAGVRTHS. Over residues 457–474 the composition is skewed to acidic residues; the sequence is DAEDDDDTSLESDLDPEE. Residues serine 532 and serine 545 each carry the phosphoserine modification. Residues 537–639 are disordered; the sequence is DADEALEISQ…GRGSKADEDG (103 aa). A Glycyl lysine isopeptide (Lys-Gly) (interchain with G-Cter in SUMO2) cross-link involves residue lysine 571. Serine 576 is subject to Phosphoserine. Residues lysine 634 and lysine 650 each participate in a glycyl lysine isopeptide (Lys-Gly) (interchain with G-Cter in SUMO2) cross-link. Phosphoserine is present on serine 667. A Glycyl lysine isopeptide (Lys-Gly) (interchain with G-Cter in SUMO2) cross-link involves residue lysine 669. Serine 679 bears the Phosphoserine mark. Lysine 701 participates in a covalent cross-link: Glycyl lysine isopeptide (Lys-Gly) (interchain with G-Cter in SUMO2). A coiled-coil region spans residues 730-768; that stretch reads IKKVAEAKARKKRRVLKKLEQTKKKAEAVVNTVDISERE. At arginine 774 the chain carries Citrulline. Residues 802 to 812 are compositionally biased toward basic residues; sequence VRRPAGVKGHF. The segment at 802–838 is disordered; that stretch reads VRRPAGVKGHFKVVDSRMKKDQRAQQRKEQKKKHKRK. Basic and acidic residues predominate over residues 813 to 829; the sequence is KVVDSRMKKDQRAQQRK.

Belongs to the class I-like SAM-binding methyltransferase superfamily. RNA methyltransferase RlmE family. SPB1 subfamily. Interacts with NIP7. Citrullinated by PADI4.

The protein localises to the nucleus. It is found in the nucleolus. It carries out the reaction a ribonucleotide in rRNA + S-adenosyl-L-methionine = a 2'-O-methylribonucleotide in rRNA + S-adenosyl-L-homocysteine + H(+). RNA 2'-O-methyltransferase involved in the processing of the 34S pre-rRNA to 18S rRNA and in 40S ribosomal subunit formation. In Mus musculus (Mouse), this protein is pre-rRNA 2'-O-ribose RNA methyltransferase FTSJ3 (Ftsj3).